The following is a 165-amino-acid chain: Crossover junction endodeoxyribonuclease RuvC (165 aa).

Catalysis depends on residues Asp-7, Glu-67, and Asp-140. Positions 7, 67, and 140 each coordinate Mg(2+).

It belongs to the RuvC family. As to quaternary structure, homodimer which binds Holliday junction (HJ) DNA. The HJ becomes 2-fold symmetrical on binding to RuvC with unstacked arms; it has a different conformation from HJ DNA in complex with RuvA. In the full resolvosome a probable DNA-RuvA(4)-RuvB(12)-RuvC(2) complex forms which resolves the HJ. The cofactor is Mg(2+).

The protein localises to the cytoplasm. The catalysed reaction is Endonucleolytic cleavage at a junction such as a reciprocal single-stranded crossover between two homologous DNA duplexes (Holliday junction).. Its function is as follows. The RuvA-RuvB-RuvC complex processes Holliday junction (HJ) DNA during genetic recombination and DNA repair. Endonuclease that resolves HJ intermediates. Cleaves cruciform DNA by making single-stranded nicks across the HJ at symmetrical positions within the homologous arms, yielding a 5'-phosphate and a 3'-hydroxyl group; requires a central core of homology in the junction. The consensus cleavage sequence is 5'-(A/T)TT(C/G)-3'. Cleavage occurs on the 3'-side of the TT dinucleotide at the point of strand exchange. HJ branch migration catalyzed by RuvA-RuvB allows RuvC to scan DNA until it finds its consensus sequence, where it cleaves and resolves the cruciform DNA. This Thermotoga petrophila (strain ATCC BAA-488 / DSM 13995 / JCM 10881 / RKU-1) protein is Crossover junction endodeoxyribonuclease RuvC.